We begin with the raw amino-acid sequence, 346 residues long: DNA-directed RNA polymerases I and III subunit RPAC1 (346 aa).

Residue Ala2 is modified to N-acetylalanine. Residue Ser4 is modified to Phosphoserine.

Belongs to the archaeal Rpo3/eukaryotic RPB3 RNA polymerase subunit family. Component of the RNA polymerase I and RNA polymerase III complexes consisting of at least 13 and 17 subunits, respectively. Pol I complex consists of a ten-subunit catalytic core composed of POLR1A/RPA1, POLR1B/RPA2, POLR1C/RPAC1, POLR1D/RPAC2, POLR1H/RPA12, POLR2E/RPABC1, POLR2F/RPABC2, POLR2H/RPABC3, POLR2K/RPABC4 and POLR2L/RPABC5; a mobile stalk subunit POLR1F/RPA43 protruding from the core and additional subunits homologous to general transcription factors POLR1E/RPA49 and POLR1G/RPA34. Part of Pol I pre-initiation complex (PIC), in which Pol I core assembles with RRN3 and promoter-bound UTBF and SL1/TIF-IB complex. Pol III complex consists of a ten-subunit catalytic core composed of POLR3A/RPC1, POLR3B/RPC2, POLR1C/RPAC1, POLR1D/RPAC2, POLR3K/RPC10, POLR2E/RPABC1, POLR2F/RPABC2, POLR2H/RPABC3, POLR2K/RPABC4 and POLR2L/RPABC5; a mobile stalk composed of two subunits POLR3H/RPC8 and CRCP/RPC9, protruding from the core and functioning primarily in transcription initiation; and additional subunits homologous to general transcription factors of the RNA polymerase II machinery, POLR3C/RPC3-POLR3F/RPC6-POLR3G/RPC7 heterotrimer required for transcription initiation and POLR3D/RPC4-POLR3E/RPC5 heterodimer involved in both transcription initiation and termination.

It is found in the nucleus. Its subcellular location is the nucleolus. It localises to the cytoplasm. The protein resides in the cytosol. Functionally, DNA-dependent RNA polymerase catalyzes the transcription of DNA into RNA using the four ribonucleoside triphosphates as substrates. Common component of RNA polymerases I and III which synthesize ribosomal RNA precursors and short non-coding RNAs including 5S rRNA, snRNAs, tRNAs and miRNAs, respectively. POLR1C/RPAC1 is part of the polymerase core and may function as a clamp element that moves to open and close the cleft. The sequence is that of DNA-directed RNA polymerases I and III subunit RPAC1 from Homo sapiens (Human).